The chain runs to 1046 residues: Hemoglobin-haptoglobin-binding protein A (1046 aa).

A signal peptide spans 1–24 (MTNFRLNLLAYSVMLGLTAGVAYA). 4 tandem repeats follow at residues 26–29 (QPTN), 30–33 (QPTN), 34–37 (QPTN), and 38–41 (QPTN). A 4 X 4 AA tandem repeats of Q-P-T-N region spans residues 26-41 (QPTNQPTNQPTNQPTN). Residues 51 to 58 (EQINVLGS) carry the TonB box motif. Residues 61–188 (HNDNTPPKIA…LGGSVSFDTK (128 aa)) form the TBDR plug domain. The region spanning 196–1046 (NKNYYASYKR…NYRMSVQFEF (851 aa)) is the TBDR beta-barrel domain. A TonB C-terminal box motif is present at residues 1029-1046 (NRFYAPGRNYRMSVQFEF).

The protein belongs to the TonB-dependent receptor family. Hemoglobin/haptoglobin binding protein subfamily.

It localises to the cell outer membrane. In terms of biological role, acts as a receptor for the hemoglobin/haptoglobin complex of the human host and is required for heme uptake. Does not bind hemoglobin alone. The protein is Hemoglobin-haptoglobin-binding protein A (hhuA) of Haemophilus influenzae.